The chain runs to 332 residues: Centrosomal AT-AC splicing factor (332 aa).

The segment at 1 to 169 (MAPAQRCPLC…QSRQEVVRSV (169 aa)) is required for centrosome location. K31 is subject to N6-acetyllysine; by NAT10. Residues 137-168 (LDSYEEKEDKVIKEMAAQIREVEQSRQEVVRS) are a coiled coil. The segment at 169–213 (VLEPQAVPDPEEGSSAPRSWKGMNSQVASSLQQPSNLDLPPAPEL) is disordered. A compositionally biased stretch (polar residues) spans 190-204 (GMNSQVASSLQQPSN).

In terms of assembly, interacts with SASS6; the interaction increases with CENATAC acetylation. Acetylated. Acetylation oscillates throughout the cell cycle, and the acetylation state at Lys-31 is regulated by the deacetylase SIRT1 and the acetyltransferase NAT10. Deacetylated CENATAC is responsible for its centrosome targeting, and acetylated CENATAC promotes SASS6 degradation by enhancing the binding affinity of SASS6 for APC/C E3 ubiquitin-protein ligase complex/FZR1.

The protein resides in the cytoplasm. Its subcellular location is the cytoskeleton. It is found in the microtubule organizing center. The protein localises to the centrosome. Its function is as follows. Component of the minor spliceosome that promotes splicing of a specific, rare minor intron subtype. Negative regulator of centrosome duplication. Constrains centriole number by modulating the degradation of the centrosome-duplication-associated protein SASS6 in an acetylation-dependent manner. SIRT1 deacetylates CENATAC in G1 phase, allowing for SASS6 accumulation on the centrosome and subsequent procentriole assembly. The CENATAC acetylation level is restored in mitosis by NAT10, promoting SASS6 proteasome degradation by facilitating SASS6 binding to APC/C E3 ubiquitin-protein ligase complex/FZR1. This Homo sapiens (Human) protein is Centrosomal AT-AC splicing factor.